Consider the following 100-residue polypeptide: uncharacterized protein (100 aa).

An N-terminal signal peptide occupies residues 1-23 (MKYVALAFVLSLVILQISAQVGA).

As to expression, nacreous layer of shell (at protein level). Expressed primarily in the mantle with highest level in the mantle pallium and lower level in the mantle edge.

The protein localises to the secreted. This is an uncharacterized protein from Margaritifera margaritifera (Freshwater pearl mussel).